Consider the following 636-residue polypeptide: Probable potassium transport system protein Kup (636 aa).

12 consecutive transmembrane segments (helical) span residues 22–42 (MGLLVAAVGVVYGDIGTSPLY), 64–84 (ILSLILWSLLWVVSFKYVMFI), 114–134 (ALMVGCGLVGASLFYGDSMIT), 150–170 (FEGIDHWVVPISLVVLVALFL), 182–202 (LFGPIMVTWFVVLGALGVHGI), 220–240 (FFIVHPGMGVAILGAVVLALT), 261–281 (WFALVLPALVLNYFGQGAILL), 293–313 (LLAPGWALLPLVGLATMATVI), 351–371 (IYIGAVNWTLMVGVVLLVIGF), 383–403 (VAVTGTMLMTTILVSAVMLLL), 408–428 (PVLAVPLLVGFLLVDGLFFAA), and 433–453 (IVQGGAFPVLAGIVLFVLMST).

Belongs to the HAK/KUP transporter (TC 2.A.72) family.

It is found in the cell inner membrane. The catalysed reaction is K(+)(in) + H(+)(in) = K(+)(out) + H(+)(out). Functionally, transport of potassium into the cell. Likely operates as a K(+):H(+) symporter. In Pseudomonas entomophila (strain L48), this protein is Probable potassium transport system protein Kup.